The following is a 218-amino-acid chain: Dehydration-responsive element-binding protein 1B (218 aa).

Positions Met1–Arg26 are disordered. The segment at residues Val32–Ala95 is a DNA-binding region (AP2/ERF). The segment at Ser131–Asn151 is disordered.

This sequence belongs to the AP2/ERF transcription factor family. ERF subfamily.

The protein resides in the nucleus. In terms of biological role, transcriptional activator that binds specifically to the DNA sequence 5'-[AG]CCGAC-3'. Binding to the C-repeat/DRE element mediates high salinity- and dehydration-inducible transcription. Confers resistance to high salt, cold and drought stress. This Oryza sativa subsp. japonica (Rice) protein is Dehydration-responsive element-binding protein 1B (DREB1B).